We begin with the raw amino-acid sequence, 246 residues long: Allergin-1 (246 aa).

The signal sequence occupies residues 1–33 (MGDGDSPMCLSAVSFKGIRCWLDKLLLWALTIS). The Extracellular segment spans residues 34–150 (ITLQNAAVDC…DESCPSCRLS (117 aa)). The 80-residue stretch at 52-131 (PSPNLNSSMN…VNVSNLMKYS (80 aa)) folds into the Ig-like C2-type domain. Residue Asn-68 is glycosylated (N-linked (GlcNAc...) asparagine). An intrachain disulfide couples Cys-73 to Cys-120. A helical transmembrane segment spans residues 151–171 (LLLPGLLLGILVIVLVLAYLI). The Cytoplasmic portion of the chain corresponds to 172–246 (HLKYKKGKKT…ADYIYSELTH (75 aa)). 2 short sequence motifs (ITIM motif) span residues 214 to 219 (IHYATP) and 239 to 244 (YIYSEL). Phosphotyrosine occurs at positions 216 and 241.

As to quaternary structure, monomer. Interacts (tyrosine-phosphorylated) with PTPN6, PTPN11 and INPP5D. N-glycosylated. Expressed in myeloid cells (dendritic cells, macrophages and neutrophils but not in T-cells, B-cells or natural killer cells) and mast cells (at protein level).

The protein resides in the cell membrane. It localises to the secreted. Functionally, immunoglobulin-like receptor which plays an inhibitory role in degranulation of mast cells. Negatively regulates IgE-mediated mast cell activation and suppresses the type I immediate hypersensitivity reaction. This is Allergin-1 (Milr1) from Mus musculus (Mouse).